Reading from the N-terminus, the 353-residue chain is UPF0324 membrane protein PP_3661 (353 aa).

8 helical membrane-spanning segments follow: residues 20–42, 70–92, 105–127, 137–159, 166–188, 234–253, 266–288, and 326–348; these read LNGI…MPAI, ASWA…AFFG, WSGL…WCGM, ALLT…ESAL, SAMA…PLAI, MTRV…WISR, IAMP…QVLP, and ALAT…TLGV.

The protein belongs to the UPF0324 family.

Its subcellular location is the cell membrane. This Pseudomonas putida (strain ATCC 47054 / DSM 6125 / CFBP 8728 / NCIMB 11950 / KT2440) protein is UPF0324 membrane protein PP_3661.